The sequence spans 144 residues: Large ribosomal subunit protein uL14 (144 aa).

It belongs to the universal ribosomal protein uL14 family. As to quaternary structure, part of the 50S ribosomal subunit. Forms a cluster with proteins L3 and L24e, part of which may contact the 16S rRNA in 2 intersubunit bridges.

In terms of biological role, binds to 23S rRNA. Forms part of two intersubunit bridges in the 70S ribosome. This Pyrobaculum aerophilum (strain ATCC 51768 / DSM 7523 / JCM 9630 / CIP 104966 / NBRC 100827 / IM2) protein is Large ribosomal subunit protein uL14.